The following is a 167-amino-acid chain: Iron-sulfur cluster assembly enzyme ISCU (167 aa).

Residues 1-34 constitute a mitochondrion transit peptide; sequence MAAAGAFRLRRAASALLLRSPRLPARELSAPARL. A Phosphoserine; by MTOR modification is found at Ser14. A Zn(2+)-binding site is contributed by Pro46. Cys69 serves as the catalytic Cysteine persulfide intermediate. Cys69 carries the cysteine persulfide modification. Gly70, Asp71, Cys95, Lys112, and Cys138 together coordinate Zn(2+). Cys138 (cysteine persulfide intermediate) is an active-site residue. Residue Cys138 is modified to Cysteine persulfide.

The protein belongs to the NifU family. In terms of assembly, homodimer; Tyr-35-mediated dimerization of two iron- and sulfide-containing ISCU subunit bind to the cysteine desulfurase complex. Component of the mitochondrial core iron-sulfur cluster (ISC) complex composed of NFS1, LYRM4, NDUFAB1, ISCU, FXN, and FDX2; this complex is an heterohexamer containing two copies of each monomer. Interacts (D-state) with NFS1 (homodimer form); each monomer interacts with the C-terminal regions of each NFS1 monomer. Interacts (monomer form) with FXN (via ferrous form); the interaction is possible when both are bound to the dimeric form of the cysteine desulfurase complex (NFS1:LYRM4) and enhances FXN interaction to the dimeric form of the cysteine desulfurase complex (NFS1:LYRM4). Interacts with GLRX5. Interacts (D-state) with HSPA9. Interacts (S-state) with HSCB; this interaction stimulates the ATPase activity of HSPA9. Component of the cytoplasmic core iron-sulfur cluster (ISC) complex composed at least of NFS1, LYRM4, and ISCU; this complex interacts with FXN. Monomer; each monomer binds to the C-terminal regions of NFS1 (cytoplasmic and homodimer form). Interacts with NFS1 (cytoplasmic and homodimer form); this interaction promotes de novo iron-sulfur cluster formation. Interacts with HSCB (cytoplasmic form); this interaction stabilizes the (Fe-S) clusters on ISCU. Phosphorylation at Ser-14 is required for ISCU protein stabilization in the cytosol, whereas dephosphorylation of Ser-14, due to the inhibition of mTORC1 (mammalian target of rapamycin complex 1) complex, leads to degradation of the precursor form and ultimately to a decrease in the mitochondrial mature form. In terms of processing, cysteine persulfide is reduced by thiol-containing molecules such as glutathione and L-cysteine. Detected in heart, liver, skeletal muscle, brain, pancreas, kidney, lung and placenta.

The protein resides in the mitochondrion. Its subcellular location is the cytoplasm. It localises to the nucleus. Mitochondrial scaffold protein, of the core iron-sulfur cluster (ISC) assembly complex, that provides the structural architecture on which the [2Fe-2S] clusters are assembled. The core iron-sulfur cluster (ISC) assembly complex is involved in the de novo synthesis of a [2Fe-2S] cluster, the first step of the mitochondrial iron-sulfur protein biogenesis. This process is initiated by the cysteine desulfurase complex (NFS1:LYRM4:NDUFAB1) that produces persulfide which is delivered on the scaffold protein ISCU in a FXN-dependent manner. Then this complex is stabilized by FDX2 which provides reducing equivalents to accomplish the [2Fe-2S] cluster assembly. Finally, the [2Fe-2S] cluster is transferred from ISCU to chaperone proteins, including HSCB, HSPA9 and GLRX5. Exists as two slow interchanging conformational states, a structured (S) and disordered (D) form. May modulate NFS1 desulfurase activity in a zinc-dependent manner. Modulates the interaction between FXN and the cysteine desulfurase complex. Its function is as follows. Cytoplasmic scaffold protein, of the cytoplasmic core iron-sulfur cluster (ISC) assembly complex that provides the structural architecture on which the Fe-S clusters are assembled and may be involved in the cytoplasmic iron-sulfur protein biogenesis. This Homo sapiens (Human) protein is Iron-sulfur cluster assembly enzyme ISCU.